The sequence spans 257 residues: uncharacterized protein (257 aa).

Residues 7 to 27 (LMLGICLVLLIILIVGYVIMT) form a helical membrane-spanning segment.

This sequence belongs to the staphylococcal tandem lipoprotein family.

Its subcellular location is the cell membrane. This is an uncharacterized protein from Staphylococcus aureus (strain Mu50 / ATCC 700699).